A 597-amino-acid chain; its full sequence is Scarecrow-like protein 5 (597 aa).

The tract at residues 111 to 172 is disordered; it reads ESSSGTKSHP…SPLSGSSATN (62 aa). Residues 123–169 show a composition bias toward low complexity; that stretch reads NNKNNSSSTTSFSSNESPISQANNNNLSRFNNHSPEENNNSPLSGSS. Positions 218–597 constitute a GRAS domain; the sequence is SMEMISRGDL…QPLITSCAWR (380 aa). The tract at residues 225–285 is leucine repeat I (LRI); sequence GDLKGVLYEC…VARLASSGSS (61 aa). The VHIID stretch occupies residues 304 to 369; the sequence is MHILYEACPY…GGPPNVRITG (66 aa). The VHIID motif lies at 335–339; sequence VHIID. The tract at residues 385 to 417 is leucine repeat II (LRII); the sequence is LVGQRLGKLAEMCGVPFEFHGAALCCTEVEIEK. Residues 426-520 form a PFYRE region; it reads LAVNFPLVLH…QHCLAREVVN (95 aa). Residues 523–597 are SAW; the sequence is ACEGVEREER…QPLITSCAWR (75 aa).

This sequence belongs to the GRAS family. In terms of tissue distribution, expressed in seedlings, roots, shoots, leaves, flowers and siliques.

It is found in the nucleus. Its function is as follows. Probable transcription factor involved in plant development. This chain is Scarecrow-like protein 5 (SCL5), found in Arabidopsis thaliana (Mouse-ear cress).